Reading from the N-terminus, the 41-residue chain is MKIKNSLKALKGRHRDNRVVRRKGRIYILNKTNPRFRARQG.

The protein belongs to the bacterial ribosomal protein bL36 family.

This is Large ribosomal subunit protein bL36 from Bartonella bacilliformis (strain ATCC 35685 / KC583 / Herrer 020/F12,63).